Consider the following 243-residue polypeptide: 1-(5-phosphoribosyl)-5-[(5-phosphoribosylamino)methylideneamino] imidazole-4-carboxamide isomerase (243 aa).

D8 (proton acceptor) is an active-site residue. D129 acts as the Proton donor in catalysis.

Belongs to the HisA/HisF family.

The protein localises to the cytoplasm. It carries out the reaction 1-(5-phospho-beta-D-ribosyl)-5-[(5-phospho-beta-D-ribosylamino)methylideneamino]imidazole-4-carboxamide = 5-[(5-phospho-1-deoxy-D-ribulos-1-ylimino)methylamino]-1-(5-phospho-beta-D-ribosyl)imidazole-4-carboxamide. It functions in the pathway amino-acid biosynthesis; L-histidine biosynthesis; L-histidine from 5-phospho-alpha-D-ribose 1-diphosphate: step 4/9. This is 1-(5-phosphoribosyl)-5-[(5-phosphoribosylamino)methylideneamino] imidazole-4-carboxamide isomerase from Nitratidesulfovibrio vulgaris (strain DSM 19637 / Miyazaki F) (Desulfovibrio vulgaris).